The chain runs to 408 residues: Probable ethanolamine permease EutH (408 aa).

Helical transmembrane passes span 1 to 21 (MGIN…AAVD), 61 to 81 (AMVG…PVII), 89 to 109 (ANPS…FFLA), 126 to 146 (ILGS…LGII), 155 to 175 (ALGV…GGLI), 192 to 212 (FALI…VALG), 230 to 250 (FLVA…LLGW), 274 to 294 (IEVI…VLLL), 313 to 333 (NIAA…FGMM), 342 to 362 (VINC…LGFA), and 369 to 389 (MIFP…GVAM).

It belongs to the EutH family.

The protein resides in the cell inner membrane. The catalysed reaction is ethanolamine(in) = ethanolamine(out). Its pathway is amine and polyamine degradation; ethanolamine degradation. In terms of biological role, probably involved in the diffusion of protonated ethanolamine (EA) into the cell at low pH. At low pH most EA is protonated, and this permease becomes necessary. Contributes to bacterial survival and replication in acidified macrophage vacuoles, but not to bacterial uptake by macrophages. Functionally, expression of the eut operon allows this bacteria to use ethanolamine (EA) as a carbon, nitrogen and energy source. It relies on cobalamin (vitamin B12) both as a cofactor for the ethanolamine ammonia-lyase (EAL) activity and to induce the operon. EA enhances bacterial survival in macrophages in a concentration-dependent manner, suggesting it is an important nutrient during infection. In Salmonella typhimurium (strain LT2 / SGSC1412 / ATCC 700720), this protein is Probable ethanolamine permease EutH.